Reading from the N-terminus, the 1226-residue chain is Probable phosphorylase b kinase regulatory subunit alpha (1226 aa).

A disordered region spans residues 666 to 688 (NEKITTPRGPRTLRRGESVKDRS). A compositionally biased stretch (basic and acidic residues) spans 679–688 (RRGESVKDRS).

Belongs to the phosphorylase b kinase regulatory chain family.

Its pathway is glycan biosynthesis; glycogen metabolism. Phosphorylase b kinase catalyzes the phosphorylation of serine in certain substrates, including troponin I. The alpha chain may bind calmodulin. The polypeptide is Probable phosphorylase b kinase regulatory subunit alpha (Caenorhabditis elegans).